The following is a 283-amino-acid chain: Phospholipase C (283 aa).

An N-terminal signal peptide occupies residues Met-1–Ala-24. The propeptide occupies His-25 to Arg-38. Residues Trp-39, His-52, Asp-93, His-107, His-156, Asp-160, His-166, His-180, and Glu-184 each coordinate Zn(2+). One can recognise a Zn-dependent PLC domain in the interval Trp-39–Arg-283.

Belongs to the bacterial zinc-metallophospholipase C family. In terms of assembly, monomer. Zn(2+) serves as cofactor.

It catalyses the reaction a 1,2-diacyl-sn-glycero-3-phosphocholine + H2O = phosphocholine + a 1,2-diacyl-sn-glycerol + H(+). Its function is as follows. Required, with sphingomyelinase, to effect target cell lysis (hemolysis). The sequence is that of Phospholipase C (plc) from Bacillus cereus.